Here is a 280-residue protein sequence, read N- to C-terminus: 2-dehydro-3-deoxyphosphooctonate aldolase (280 aa).

Belongs to the KdsA family.

It is found in the cytoplasm. It catalyses the reaction D-arabinose 5-phosphate + phosphoenolpyruvate + H2O = 3-deoxy-alpha-D-manno-2-octulosonate-8-phosphate + phosphate. The protein operates within carbohydrate biosynthesis; 3-deoxy-D-manno-octulosonate biosynthesis; 3-deoxy-D-manno-octulosonate from D-ribulose 5-phosphate: step 2/3. Its pathway is bacterial outer membrane biogenesis; lipopolysaccharide biosynthesis. This Coxiella burnetii (strain CbuK_Q154) (Coxiella burnetii (strain Q154)) protein is 2-dehydro-3-deoxyphosphooctonate aldolase.